We begin with the raw amino-acid sequence, 190 residues long: Segregation and condensation protein B (190 aa).

Belongs to the ScpB family. Homodimer. Homodimerization may be required to stabilize the binding of ScpA to the Smc head domains. Component of a cohesin-like complex composed of ScpA, ScpB and the Smc homodimer, in which ScpA and ScpB bind to the head domain of Smc. The presence of the three proteins is required for the association of the complex with DNA.

The protein resides in the cytoplasm. Functionally, participates in chromosomal partition during cell division. May act via the formation of a condensin-like complex containing Smc and ScpA that pull DNA away from mid-cell into both cell halves. This Bacillus cereus (strain G9842) protein is Segregation and condensation protein B.